Consider the following 584-residue polypeptide: HERV-H_2q24.3 provirus ancestral Env polyprotein (584 aa).

The first 35 residues, 1-35, serve as a signal peptide directing secretion; sequence MIFAGKAPSNTSTLMKFYSLLLYSLLFSFPFLCHP. The Extracellular portion of the chain corresponds to 36–523; it reads LPLPSYLHHT…WALSNWMSWV (488 aa). Asn-47 carries N-linked (GlcNAc...) asparagine glycosylation. Residues 64–67 carry the CXXC motif; it reads CWLC. N-linked (GlcNAc...) asparagine glycosylation is found at Asn-199, Asn-222, Asn-265, Asn-283, Asn-352, and Asn-370. The tract at residues 388–408 is fusion peptide; the sequence is VIPLIPLMVGLGLSASTVALG. Residues 454 to 470 carry the CKS-17 motif; it reads LQNRRGLDLLTAEKGGL. Cys-471 and Cys-478 form a disulfide bridge. Positions 471–479 match the CX6CC motif; the sequence is CIFLNEECC. Residue Asn-483 is glycosylated (N-linked (GlcNAc...) asparagine). A helical membrane pass occupies residues 524-544; that stretch reads LPIVSPLIPIFLLLLFGPCIF. Residues 545 to 584 lie on the Cytoplasmic side of the membrane; sequence RLVSQFIQNRIQAITNHSIRQMFLLTSPQYHPLPQDLPSA.

It belongs to the gamma type-C retroviral envelope protein family. HERV class-I H env subfamily. In terms of assembly, the surface (SU) and transmembrane (TM) proteins form a heterodimer. SU and TM are attached by noncovalent interactions or by a labile interchain disulfide bond. In terms of processing, specific enzymatic cleavages in vivo yield the mature SU and TM proteins. Post-translationally, the CXXC motif is highly conserved across a broad range of retroviral envelope proteins. It is thought to participate in the formation of a labile disulfide bond possibly with the CX6CC motif present in the transmembrane protein. Isomerization of the intersubunit disulfide bond to an SU intrachain disulfide bond is thought to occur upon receptor recognition in order to allow membrane fusion. In terms of tissue distribution, low expression in skin and testis. No expression in several cell lines.

It is found in the virion. The protein resides in the cell membrane. In terms of biological role, retroviral envelope proteins mediate receptor recognition and membrane fusion during early infection. Endogenous envelope proteins may have kept, lost or modified their original function during evolution. This endogenous envelope protein has lost its original fusogenic properties but has immunosuppressive properties in vivo. SU mediates receptor recognition. Its function is as follows. TM anchors the envelope heterodimer to the viral membrane through one transmembrane domain. The other hydrophobic domain, called fusion peptide, mediates fusion of the viral membrane with the target cell membrane. This is HERV-H_2q24.3 provirus ancestral Env polyprotein from Homo sapiens (Human).